The chain runs to 73 residues: MIYKVLYQKDKIVNPRRETTQTLYMEADNMVEARSTVEDNTPYNIELIQELTGNSLAYEKEHADFKLTKFDKK.

It belongs to the RNA polymerase subunit epsilon family. RNAP is composed of a core of 2 alpha, a beta and a beta' subunit. The core is associated with a delta subunit, and at least one of epsilon or omega. When a sigma factor is associated with the core the holoenzyme is formed, which can initiate transcription.

It catalyses the reaction RNA(n) + a ribonucleoside 5'-triphosphate = RNA(n+1) + diphosphate. Its function is as follows. A non-essential component of RNA polymerase (RNAP). This chain is DNA-directed RNA polymerase subunit epsilon, found in Lactobacillus helveticus (strain DPC 4571).